A 388-amino-acid chain; its full sequence is Lipid-A-disaccharide synthase (388 aa).

This sequence belongs to the LpxB family.

The enzyme catalyses a lipid X + a UDP-2-N,3-O-bis[(3R)-3-hydroxyacyl]-alpha-D-glucosamine = a lipid A disaccharide + UDP + H(+). The protein operates within bacterial outer membrane biogenesis; LPS lipid A biosynthesis. In terms of biological role, condensation of UDP-2,3-diacylglucosamine and 2,3-diacylglucosamine-1-phosphate to form lipid A disaccharide, a precursor of lipid A, a phosphorylated glycolipid that anchors the lipopolysaccharide to the outer membrane of the cell. This chain is Lipid-A-disaccharide synthase, found in Burkholderia thailandensis (strain ATCC 700388 / DSM 13276 / CCUG 48851 / CIP 106301 / E264).